The sequence spans 417 residues: Phosphoglycerate kinase, cytosolic (417 aa).

Residues V23, D24, F25, N26, R39, S61, H62, G64, R65, R132, H168, and R169 each contribute to the (2R)-3-phosphoglycerate site. Residues G214 and A215 each contribute to the ADP site. G214 lines the CDP pocket. AMP contacts are provided by A215 and K216. Position 215 (A215) interacts with ATP. A215 contributes to the Mg(2+) binding site. (2R)-3-phosphoglycerate is bound at residue K216. D219 contributes to the CDP binding site. Mg(2+) is bound at residue D219. 2 residues coordinate ADP: K220 and G238. K220 provides a ligand contact to AMP. ATP is bound at residue K220. G238 provides a ligand contact to CDP. 2 residues coordinate AMP: A239 and A311. Residues A239 and A311 each coordinate ATP. ADP contacts are provided by A311 and N335. 2 residues coordinate CDP: G336 and F341. 4 residues coordinate ADP: F341, E342, D374, and S375. E342 contacts AMP. Residues E342, D374, and S375 each coordinate ATP. D374 contributes to the Mg(2+) binding site.

The protein belongs to the phosphoglycerate kinase family. Monomer. The cofactor is Mg(2+).

Its subcellular location is the cytoplasm. It catalyses the reaction (2R)-3-phosphoglycerate + ATP = (2R)-3-phospho-glyceroyl phosphate + ADP. Its pathway is carbohydrate degradation; glycolysis; pyruvate from D-glyceraldehyde 3-phosphate: step 2/5. The protein is Phosphoglycerate kinase, cytosolic (PGKB) of Leishmania major.